A 590-amino-acid chain; its full sequence is Putative ABC transporter ATP-binding protein MM_3016 (590 aa).

ABC transporter domains follow at residues 11–251 (VRFE…KLGI) and 317–550 (VRIE…AGLI). ATP-binding positions include 45–52 (GPSGCGKS) and 350–357 (GHNGAGKT).

The protein belongs to the ABC transporter superfamily.

It localises to the cell membrane. Probably part of an ABC transporter complex. Responsible for energy coupling to the transport system. This is Putative ABC transporter ATP-binding protein MM_3016 from Methanosarcina mazei (strain ATCC BAA-159 / DSM 3647 / Goe1 / Go1 / JCM 11833 / OCM 88) (Methanosarcina frisia).